Reading from the N-terminus, the 196-residue chain is Charged multivesicular body protein 1a (196 aa).

Positions 5–41 (LFQLKFTAKQLEKLAKKAEKDSNTEQAKVKKALQQKN) form a coiled coil. Residues 170 to 181 (QGASSVGESSTR) are compositionally biased toward polar residues. The disordered stretch occupies residues 170-196 (QGASSVGESSTRTQEDQLSRRLASLRN). The short motif at 185-195 (DQLSRRLASLR) is the MIT-interacting motif element.

It belongs to the SNF7 family. In terms of assembly, probable peripherally associated component of the endosomal sorting required for transport complex III (ESCRT-III).

It is found in the cytoplasm. The protein localises to the endosome membrane. Functionally, probable peripherally associated component of the endosomal sorting required for transport complex III (ESCRT-III) which is involved in multivesicular bodies (MVBs) formation and sorting of endosomal cargo proteins into MVBs. MVBs contain intraluminal vesicles (ILVs) that are generated by invagination and scission from the limiting membrane of the endosome and mostly are delivered to lysosomes enabling degradation of membrane proteins, such as stimulated growth factor receptors, lysosomal enzymes and lipids. This is Charged multivesicular body protein 1a (chmp1a) from Xenopus laevis (African clawed frog).